A 725-amino-acid chain; its full sequence is MNTTRDANRLRQRASLSGLALAGSLGLAGCGVLGLAGCGGDNNSSTSGNVKPSFVGTVTVTRHDGANDDLLTAGLGAAGLASASAPSVATPTAPTAAELRRLDIYASYRALVDTAANGGYGTLYGPSVDVNGNATSGSGMVPGVEYIAYSDDGTGQQNVVLLVQIPDAFDPANPCIITATSSGSRGIYGAISTGEWGLKHKCAVAYTDKGTGAGPHDLATDTVPLQDGTRTTRLAAGRTAQFAAPLTDSQLAAFNAATPNRLAFKHAHSQRNPEKDWGLFTLQAVQFAFWAINDKLGAAGMPAGSPLPVRRDNTIVIASSISNGGGAAIAAAEQDTAGWIDGVAVGEPGLNLPPSANVQVARGGVTLPVSGKPLFDYVSYANLFRLCAASSSGVSAAPTQAFFAGAVGWPASVQANRCAALRANGLLSSATAAAQADEALQKLHAFGWEPESDLVHASMSYFEIDPSVAVTFGNALARASVLDNLCNFSFAAVDSAFHPTAVNATSLAQMAALGNGIPPTSGVQLINNLAQGGPTQSKQSVDGSGALAANLDGALCLRNLLTGGDAASLALQAGIAQTLRTGNLHGKPALIVQGRNDALLPVNHGARPYLGLNAQTDSSSRLSYIEVMNAQHFDGFIDLVPGYDTLFVPLVLYEQRALDAVFANLKNGTPLPPSQVVRTTPRGGTAGAAPAITAANVPNFTMTPAAGDRIGVSVSGGVATVSVPN.

The first 22 residues, 1–22 (MNTTRDANRLRQRASLSGLALA), serve as a signal peptide directing secretion. The active-site Charge relay system is serine 322.

This sequence belongs to the D-(-)-3-hydroxybutyrate oligomer hydrolase family.

Its subcellular location is the secreted. It carries out the reaction (3R)-hydroxybutanoate dimer + H2O = 2 (R)-3-hydroxybutanoate + H(+). It functions in the pathway lipid metabolism; butanoate metabolism. In terms of biological role, participates in the degradation of poly-3-hydroxybutyrate (PHB). It works downstream of poly(3-hydroxybutyrate) depolymerase, hydrolyzing D(-)-3-hydroxybutyrate oligomers of various length (3HB-oligomers) into 3HB-monomers. This Ralstonia nicotianae (strain ATCC BAA-1114 / GMI1000) (Ralstonia solanacearum) protein is D-(-)-3-hydroxybutyrate oligomer hydrolase.